Here is a 396-residue protein sequence, read N- to C-terminus: uncharacterized protein (396 aa).

This sequence belongs to the NAD(P)-dependent epimerase/dehydratase family. Requires NAD(+) as cofactor. It depends on NADP(+) as a cofactor.

In terms of biological role, putative nucleotide sugar epimerase/dehydrogenase. This is an uncharacterized protein from Sinorhizobium fredii (strain NBRC 101917 / NGR234).